An 83-amino-acid chain; its full sequence is Translational regulator CsrA (83 aa).

It belongs to the CsrA/RsmA family. As to quaternary structure, homodimer; the beta-strands of each monomer intercalate to form a hydrophobic core, while the alpha-helices form wings that extend away from the core.

It is found in the cytoplasm. A translational regulator that binds mRNA to regulate translation initiation and/or mRNA stability. Usually binds in the 5'-UTR at or near the Shine-Dalgarno sequence preventing ribosome-binding, thus repressing translation. Its main target seems to be the major flagellin gene, while its function is anatagonized by FliW. In Thermotoga petrophila (strain ATCC BAA-488 / DSM 13995 / JCM 10881 / RKU-1), this protein is Translational regulator CsrA.